The chain runs to 130 residues: DNA-directed RNA polymerase subunit omega (130 aa).

The tract at residues 109–130 (EEELLKGLEGLAPPEEQPEEDE) is disordered.

This sequence belongs to the RNA polymerase subunit omega family. The RNAP catalytic core consists of 2 alpha, 1 beta, 1 beta' and 1 omega subunit. When a sigma factor is associated with the core the holoenzyme is formed, which can initiate transcription.

It carries out the reaction RNA(n) + a ribonucleoside 5'-triphosphate = RNA(n+1) + diphosphate. Its function is as follows. Promotes RNA polymerase assembly. Latches the N- and C-terminal regions of the beta' subunit thereby facilitating its interaction with the beta and alpha subunits. This Rhodopseudomonas palustris (strain BisA53) protein is DNA-directed RNA polymerase subunit omega.